Reading from the N-terminus, the 417-residue chain is Tol-Pal system protein TolB (417 aa).

Positions 1 to 16 are cleaved as a signal peptide; it reads MKYLWLFLIYAIGLFA.

The protein belongs to the TolB family. The Tol-Pal system is composed of five core proteins: the inner membrane proteins TolA, TolQ and TolR, the periplasmic protein TolB and the outer membrane protein Pal. They form a network linking the inner and outer membranes and the peptidoglycan layer.

It localises to the periplasm. Its function is as follows. Part of the Tol-Pal system, which plays a role in outer membrane invagination during cell division and is important for maintaining outer membrane integrity. The polypeptide is Tol-Pal system protein TolB (Helicobacter pylori (strain J99 / ATCC 700824) (Campylobacter pylori J99)).